The following is a 141-amino-acid chain: MAKKVVKVVKLQIPAGKANPAPPVGPALGQAGVNIMGFCKEFNARTADQAGLIIPVEISVYEDRSFTFITKTPPAAVLLKKAAGIESGSGEPNRNKVATVKRDKVREIAETKMPDLNAADVEAAMRMVEGTARSMGIVIED.

It belongs to the universal ribosomal protein uL11 family. As to quaternary structure, part of the ribosomal stalk of the 50S ribosomal subunit. Interacts with L10 and the large rRNA to form the base of the stalk. L10 forms an elongated spine to which 2 L12 dimers bind in a sequential fashion forming a pentameric L10(L12)2(L12)2 complex. In stalled/isolated 50S subunits interacts with RqcH. In terms of processing, one or more lysine residues are methylated.

Its function is as follows. Forms part of the ribosomal stalk which helps the ribosome interact with GTP-bound translation factors. Required to recruit RqcH, which is part of the ribosome quality control system (RQC), to stalled 50S ribosomal subunits. The sequence is that of Large ribosomal subunit protein uL11 from Bacillus subtilis (strain 168).